The sequence spans 140 residues: ATP synthase epsilon chain, chloroplastic (140 aa).

Belongs to the ATPase epsilon chain family. F-type ATPases have 2 components, CF(1) - the catalytic core - and CF(0) - the membrane proton channel. CF(1) has five subunits: alpha(3), beta(3), gamma(1), delta(1), epsilon(1). CF(0) has three main subunits: a, b and c.

It localises to the plastid. The protein resides in the chloroplast thylakoid membrane. Functionally, produces ATP from ADP in the presence of a proton gradient across the membrane. This is ATP synthase epsilon chain, chloroplastic from Panax ginseng (Korean ginseng).